Here is a 1068-residue protein sequence, read N- to C-terminus: Tricorn protease homolog (1068 aa).

The interval 61–326 is six-bladed beta propeller; sequence MKAYYMYPDI…DSLTKLDINL (266 aa). The segment at 338-686 is seven-bladed beta propeller; sequence VNVMEYMNEA…RKGGVIDLSR (349 aa). The interval 692 to 762 is C-1; sequence EPEKEWRQML…RTSHSYETAY (71 aa). The active-site Charge relay system is the histidine 756. The PDZ-like stretch occupies residues 771–864; it reads SVGGLGAEFE…RVTVKVLKDE (94 aa). The C-2 stretch occupies residues 865–1068; the sequence is RFLIYRYWVE…TAIELALKQL (204 aa). Position 927 (glycine 927) interacts with substrate. The active-site Nucleophile is serine 974. The active-site Charge relay system is the glutamate 1032.

The protein belongs to the peptidase S41B family.

The protein localises to the cytoplasm. Functionally, degrades oligopeptides in a sequential manner. In Saccharolobus solfataricus (strain ATCC 35092 / DSM 1617 / JCM 11322 / P2) (Sulfolobus solfataricus), this protein is Tricorn protease homolog (tri).